A 393-amino-acid polypeptide reads, in one-letter code: Chorismate synthase (393 aa).

Residues Arg40 and Arg46 each contribute to the NADP(+) site. Residues 129-131 (RSS), 249-250 (QA), Gly301, 316-320 (KPIPT), and Arg342 contribute to the FMN site.

The protein belongs to the chorismate synthase family. Homotetramer. Requires FMNH2 as cofactor.

It carries out the reaction 5-O-(1-carboxyvinyl)-3-phosphoshikimate = chorismate + phosphate. It participates in metabolic intermediate biosynthesis; chorismate biosynthesis; chorismate from D-erythrose 4-phosphate and phosphoenolpyruvate: step 7/7. Functionally, catalyzes the anti-1,4-elimination of the C-3 phosphate and the C-6 proR hydrogen from 5-enolpyruvylshikimate-3-phosphate (EPSP) to yield chorismate, which is the branch point compound that serves as the starting substrate for the three terminal pathways of aromatic amino acid biosynthesis. This reaction introduces a second double bond into the aromatic ring system. This Geobacter metallireducens (strain ATCC 53774 / DSM 7210 / GS-15) protein is Chorismate synthase.